The sequence spans 679 residues: Protein asunder (679 aa).

The stretch at 519–541 (RLKVNKTKDQYRLFYRELEQLIQ) forms a coiled coil. Positions 564–610 (GDASNKSDPSAAHLRSYTESPLSPERLEPTNSVNSSSSSILKASKRR) are disordered. The Nuclear localization signal (NLS) signature appears at 604-610 (LKASKRR).

This sequence belongs to the Integrator subunit 13 family. In terms of assembly, belongs to the multiprotein complex Integrator, at least composed of IntS1, IntS2, IntS3, IntS4, omd/IntS5, IntS6, defl/IntS7, IntS8, IntS9, IntS10, IntS11, IntS12, asun/IntS13, IntS14 and IntS15. The core complex associates with protein phosphatase 2A subunits mts/PP2A and Pp2A-29B, to form the Integrator-PP2A (INTAC) complex. Phosphorylated.

It is found in the nucleus. The protein resides in the cytoplasm. Its subcellular location is the perinuclear region. Component of the integrator complex, a multiprotein complex that terminates RNA polymerase II (Pol II) transcription in the promoter-proximal region of genes. The integrator complex provides a quality checkpoint during transcription elongation by driving premature transcription termination of transcripts that are unfavorably configured for transcriptional elongation: the complex terminates transcription by (1) catalyzing dephosphorylation of the C-terminal domain (CTD) of Pol II subunit Polr2A/Rbp1 and Spt5, and (2) degrading the exiting nascent RNA transcript via endonuclease activity. The integrator complex is also involved in the 3'-end processing of the U7 snRNA, and also the spliceosomal snRNAs U1, U2, U4 and U5. This Drosophila mojavensis (Fruit fly) protein is Protein asunder (asun).